The following is a 305-amino-acid chain: Putative lipid kinase SAB0675c (305 aa).

Residues Asn-3 to Tyr-139 form the DAGKc domain. ATP is bound by residues Ser-44, Gly-74–Glu-80, and Thr-101. Ser-220, Asp-223, and Glu-225 together coordinate Mg(2+). Glu-281 functions as the Proton acceptor in the catalytic mechanism.

The protein belongs to the diacylglycerol/lipid kinase family. The cofactor is Mg(2+).

Its function is as follows. May catalyze the ATP-dependent phosphorylation of lipids other than diacylglycerol (DAG). The sequence is that of Putative lipid kinase SAB0675c from Staphylococcus aureus (strain bovine RF122 / ET3-1).